The following is a 601-amino-acid chain: Elongation factor 4 (601 aa).

The tr-type G domain occupies 5 to 187; the sequence is IRKKNFCIIA…AICKYVPSPK (183 aa). Residues 17–22 and 134–137 each bind GTP; these read DHGKST and NKID.

The protein belongs to the TRAFAC class translation factor GTPase superfamily. Classic translation factor GTPase family. LepA subfamily.

It is found in the cell inner membrane. It catalyses the reaction GTP + H2O = GDP + phosphate + H(+). Its function is as follows. Required for accurate and efficient protein synthesis under certain stress conditions. May act as a fidelity factor of the translation reaction, by catalyzing a one-codon backward translocation of tRNAs on improperly translocated ribosomes. Back-translocation proceeds from a post-translocation (POST) complex to a pre-translocation (PRE) complex, thus giving elongation factor G a second chance to translocate the tRNAs correctly. Binds to ribosomes in a GTP-dependent manner. The polypeptide is Elongation factor 4 (Borreliella afzelii (strain PKo) (Borrelia afzelii)).